A 161-amino-acid chain; its full sequence is Lipoprotein signal peptidase (161 aa).

3 helical membrane-spanning segments follow: residues 9 to 29 (ISLLMTIIVLVFDQVSKWLIT), 63 to 83 (KMLFFYIITIIILIVLVIFYI), and 88 to 108 (FNLFMQVAISLLFAGALGNFI). Catalysis depends on residues Asp-118 and Asp-136. Residues 131 to 151 (IFNIADSSLTIGVIFVIIALI) traverse the membrane as a helical segment.

The protein belongs to the peptidase A8 family.

The protein localises to the cell membrane. The enzyme catalyses Release of signal peptides from bacterial membrane prolipoproteins. Hydrolyzes -Xaa-Yaa-Zaa-|-(S,diacylglyceryl)Cys-, in which Xaa is hydrophobic (preferably Leu), and Yaa (Ala or Ser) and Zaa (Gly or Ala) have small, neutral side chains.. The protein operates within protein modification; lipoprotein biosynthesis (signal peptide cleavage). Its function is as follows. This protein specifically catalyzes the removal of signal peptides from prolipoproteins. The chain is Lipoprotein signal peptidase from Staphylococcus epidermidis (strain ATCC 12228 / FDA PCI 1200).